Reading from the N-terminus, the 26-residue chain is CKQAGESCDIFSQNCCVGTCAFICIE.

3 disulfide bridges follow: Cys-1/Cys-16, Cys-8/Cys-20, and Cys-15/Cys-24. The residue at position 26 (Glu-26) is a Glutamic acid 1-amide.

In terms of tissue distribution, expressed by the venom duct.

Its subcellular location is the secreted. In terms of biological role, delta-conotoxins bind to site 6 of voltage-gated sodium channels (Nav) and inhibit the inactivation process. In Conus amadis (Amadis cone), this protein is Delta-conotoxin Am2766.